The primary structure comprises 758 residues: Zinc finger protein VAR3, chloroplastic (758 aa).

The 3 X approximate repeat stretch occupies residues 122–502; it reads FPGFPDELLR…PKEETQIGLI (381 aa). 2 RanBP2-type zinc fingers span residues 276-305 and 308-338; these read KRGD…ARPK and LTGS…KRPR. Copy 1 of the repeat occupies 368 to 415; that stretch reads RWLSKVAQGGSDANSVDTDEDFPEIMPLRKGVNRYVVSTRKPPLERRL. Disordered stretches follow at residues 410–470, 512–545, 572–606, 629–654, and 727–758; these read PLER…RFES, GGNQ…SEEP, EKMP…DSDF, TLPA…INKS, and KRKT…KGDK. Composition is skewed to basic and acidic residues over residues 457-469, 519-545, and 572-581; these read RSDD…RRFE, QEDK…SEEP, and EKMPMRKGEN. The stretch at 547–596 is repeat 2; sequence RWFKRVTELHNVSDLESAIPQEISPEKMPMRKGENRFVVSRKKDRSLTSP. Residues 688-736 form repeat 3; sequence RWFKRVAEIKNISELSEIPDEDFPSIMPMRKGVNRFVVSKRKTPLERRL.

As to quaternary structure, interacts in vitro with the chloroplast-located protein CCD4/NCED4. Homodimer. Interacts with ORRM1. Interacts with PCMP-H51/CRR28 and PCMP-H12/OTP82. Interacts with ORRM6. In terms of tissue distribution, weakly expressed in leaves and roots.

It is found in the plastid. Its subcellular location is the chloroplast. Functionally, probable component of some protein complex required for chloroplast and palisade cell development. Involved in C-to-U editing of chloroplastic RNA. Controls a large number of chloroplastic editing sites. Binds the editing recognition trans-factors PCMP-H51/CRR28 and PCMP-H12/OTP82. This Arabidopsis thaliana (Mouse-ear cress) protein is Zinc finger protein VAR3, chloroplastic.